The primary structure comprises 283 residues: Rhomboid-like protease 2 (283 aa).

Residues 1 to 11 (MANIRTLSDYA) are compositionally biased toward polar residues. Residues 1 to 26 (MANIRTLSDYASSPPRGSSALEGEVG) form a disordered region. Transmembrane regions (helical) follow at residues 62–82 (IIII…AGLA), 114–134 (ICPL…WVQI), and 149–169 (LLAV…AVLF). Serine 178 (nucleophile) is an active-site residue. The next 4 helical transmembrane spans lie at 179 to 199 (TAVF…WHAI), 205 to 225 (AIIS…GSHM), 227 to 247 (SVGH…LNEN), and 260 to 280 (LTSQ…IFLV). Histidine 230 is an active-site residue.

Belongs to the peptidase S54 family.

The protein resides in the membrane. The catalysed reaction is Cleaves type-1 transmembrane domains using a catalytic dyad composed of serine and histidine that are contributed by different transmembrane domains.. Functionally, serine protease involved in intramembrane proteolysis and the subsequent release of polypeptides from their membrane anchors. The protein is Rhomboid-like protease 2 (ROM2) of Toxoplasma gondii.